Consider the following 126-residue polypeptide: Small ribosomal subunit protein uS12 (126 aa).

The segment at 1–26 is disordered; the sequence is MPTINQLVRKGRASETTKSKSPALQD. A 3-methylthioaspartic acid modification is found at Asp89. Positions 102 to 126 are disordered; sequence LDTQGVKDRRQARSKYGAKRAKAAK. Residues 113–126 are compositionally biased toward basic residues; it reads ARSKYGAKRAKAAK.

The protein belongs to the universal ribosomal protein uS12 family. Part of the 30S ribosomal subunit. Contacts proteins S8 and S17. May interact with IF1 in the 30S initiation complex.

In terms of biological role, with S4 and S5 plays an important role in translational accuracy. Its function is as follows. Interacts with and stabilizes bases of the 16S rRNA that are involved in tRNA selection in the A site and with the mRNA backbone. Located at the interface of the 30S and 50S subunits, it traverses the body of the 30S subunit contacting proteins on the other side and probably holding the rRNA structure together. The combined cluster of proteins S8, S12 and S17 appears to hold together the shoulder and platform of the 30S subunit. This Burkholderia mallei (strain ATCC 23344) protein is Small ribosomal subunit protein uS12.